The chain runs to 341 residues: Phenylalanine--tRNA ligase alpha subunit (341 aa).

Glu-253 provides a ligand contact to Mg(2+).

This sequence belongs to the class-II aminoacyl-tRNA synthetase family. Phe-tRNA synthetase alpha subunit type 1 subfamily. As to quaternary structure, tetramer of two alpha and two beta subunits. Requires Mg(2+) as cofactor.

It is found in the cytoplasm. It carries out the reaction tRNA(Phe) + L-phenylalanine + ATP = L-phenylalanyl-tRNA(Phe) + AMP + diphosphate + H(+). The protein is Phenylalanine--tRNA ligase alpha subunit of Methylococcus capsulatus (strain ATCC 33009 / NCIMB 11132 / Bath).